The primary structure comprises 31 residues: Cytochrome b6-f complex subunit 6 (31 aa).

The helical transmembrane segment at 7-25 threads the bilayer; the sequence is YSGFLLAAPIPASAPFTGL.

Belongs to the PetL family. In terms of assembly, the 4 large subunits of the cytochrome b6-f complex are cytochrome b6, subunit IV (17 kDa polypeptide, PetD), cytochrome f and the Rieske protein, while the 4 small subunits are PetG, PetL, PetM and PetN. The complex functions as a dimer.

It is found in the plastid. It localises to the chloroplast thylakoid membrane. Functionally, component of the cytochrome b6-f complex, which mediates electron transfer between photosystem II (PSII) and photosystem I (PSI), cyclic electron flow around PSI, and state transitions. PetL is important for photoautotrophic growth as well as for electron transfer efficiency and stability of the cytochrome b6-f complex. This Huperzia lucidula (Shining clubmoss) protein is Cytochrome b6-f complex subunit 6.